Reading from the N-terminus, the 289-residue chain is 4-diphosphocytidyl-2-C-methyl-D-erythritol kinase (289 aa).

K11 is a catalytic residue. 95–105 (PMGGGIGGGSS) contributes to the ATP binding site. D137 is an active-site residue.

Belongs to the GHMP kinase family. IspE subfamily.

The enzyme catalyses 4-CDP-2-C-methyl-D-erythritol + ATP = 4-CDP-2-C-methyl-D-erythritol 2-phosphate + ADP + H(+). It functions in the pathway isoprenoid biosynthesis; isopentenyl diphosphate biosynthesis via DXP pathway; isopentenyl diphosphate from 1-deoxy-D-xylulose 5-phosphate: step 3/6. Functionally, catalyzes the phosphorylation of the position 2 hydroxy group of 4-diphosphocytidyl-2C-methyl-D-erythritol. This Aeromonas salmonicida (strain A449) protein is 4-diphosphocytidyl-2-C-methyl-D-erythritol kinase.